The sequence spans 892 residues: Alpha-actinin-1 (892 aa).

An N-acetylmethionine modification is found at Met-1. The segment at Met-1–His-247 is actin-binding. Ser-6 is modified (phosphoserine). Tyr-12 is subject to Phosphotyrosine; by FAK1. Calponin-homology (CH) domains lie at Lys-31 to Ala-135 and Thr-144 to Ser-250. Lys-95 and Lys-195 each carry N6-acetyllysine. 4 Spectrin repeats span residues Gln-274–Asn-384, His-394–Arg-499, Gln-509–Glu-620, and Arg-630–Asn-733. The interval Gln-274–Asn-733 is interaction with DDN. Residue Ser-471 is modified to Phosphoserine. Residue Lys-676 is modified to N6-acetyllysine. At Ser-677 the chain carries Phosphoserine. EF-hand domains lie at Glu-746–Asp-781 and Gln-787–Asp-822. 5 residues coordinate Ca(2+): Asp-759, Asp-761, Ser-763, Thr-765, and Glu-770. Ser-890 is modified (phosphoserine).

Belongs to the alpha-actinin family. As to quaternary structure, homodimer; antiparallel. Interacts with MYOZ2, TTID and LPP. Interacts with DDN. Interacts with PSD. Interacts with MICALL2. Interacts with DNM2 and CTTN. Interacts with PDLIM1. Interacts with PDLIM2. Interacts with PDLIM4 (via PDZ domain). Interacts with IGSF8.

It localises to the cytoplasm. Its subcellular location is the cytoskeleton. The protein resides in the myofibril. The protein localises to the sarcomere. It is found in the z line. It localises to the cell membrane. Its subcellular location is the cell junction. The protein resides in the cell projection. The protein localises to the ruffle. Functionally, F-actin cross-linking protein which is thought to anchor actin to a variety of intracellular structures. Association with IGSF8 regulates the immune synapse formation and is required for efficient T-cell activation. In Bos taurus (Bovine), this protein is Alpha-actinin-1 (ACTN1).